Here is a 381-residue protein sequence, read N- to C-terminus: Chaperone protein DnaJ (381 aa).

Residues 5–70 (DYYEVLGIER…EKRSAYDQFG (66 aa)) form the J domain. The segment at 137–215 (GTTVDIRVPR…CHGEGRVRET (79 aa)) adopts a CR-type zinc-finger fold. Positions 150, 153, 167, 170, 189, 192, 203, and 206 each coordinate Zn(2+). 4 CXXCXGXG motif repeats span residues 150 to 157 (CEHCDGDG), 167 to 174 (CPTCHGQG), 189 to 196 (CPTCHGAG), and 203 to 210 (CRKCHGEG).

Belongs to the DnaJ family. In terms of assembly, homodimer. The cofactor is Zn(2+).

It localises to the cytoplasm. In terms of biological role, participates actively in the response to hyperosmotic and heat shock by preventing the aggregation of stress-denatured proteins and by disaggregating proteins, also in an autonomous, DnaK-independent fashion. Unfolded proteins bind initially to DnaJ; upon interaction with the DnaJ-bound protein, DnaK hydrolyzes its bound ATP, resulting in the formation of a stable complex. GrpE releases ADP from DnaK; ATP binding to DnaK triggers the release of the substrate protein, thus completing the reaction cycle. Several rounds of ATP-dependent interactions between DnaJ, DnaK and GrpE are required for fully efficient folding. Also involved, together with DnaK and GrpE, in the DNA replication of plasmids through activation of initiation proteins. This is Chaperone protein DnaJ from Chromohalobacter salexigens (strain ATCC BAA-138 / DSM 3043 / CIP 106854 / NCIMB 13768 / 1H11).